The sequence spans 81 residues: Small ribosomal subunit protein bS20 (81 aa).

Over residues 1–11 the composition is skewed to basic residues; that stretch reads MPNIKSQKKRV. The segment at 1–20 is disordered; that stretch reads MPNIKSQKKRVLTNEKSRAS.

The protein belongs to the bacterial ribosomal protein bS20 family.

Its function is as follows. Binds directly to 16S ribosomal RNA. This Mesoplasma florum (strain ATCC 33453 / NBRC 100688 / NCTC 11704 / L1) (Acholeplasma florum) protein is Small ribosomal subunit protein bS20.